The following is an 85-amino-acid chain: Large ribosomal subunit protein bL27 (85 aa).

The tract at residues 1-21 (MAHKKAGGSSRNGRDSEGRRL) is disordered.

Belongs to the bacterial ribosomal protein bL27 family.

The chain is Large ribosomal subunit protein bL27 from Rhodospirillum rubrum (strain ATCC 11170 / ATH 1.1.1 / DSM 467 / LMG 4362 / NCIMB 8255 / S1).